The primary structure comprises 232 residues: Small ribosomal subunit protein uS3 (232 aa).

Residues 39 to 107 form the KH type-2 domain; the sequence is VRQYLTKELK…PAQINIAEVR (69 aa).

Belongs to the universal ribosomal protein uS3 family. Part of the 30S ribosomal subunit. Forms a tight complex with proteins S10 and S14.

Binds the lower part of the 30S subunit head. Binds mRNA in the 70S ribosome, positioning it for translation. The chain is Small ribosomal subunit protein uS3 from Aliivibrio salmonicida (strain LFI1238) (Vibrio salmonicida (strain LFI1238)).